The primary structure comprises 215 residues: Nucleoside triphosphate pyrophosphatase (215 aa).

Belongs to the Maf family. The cofactor is a divalent metal cation.

Its subcellular location is the cytoplasm. The enzyme catalyses a ribonucleoside 5'-triphosphate + H2O = a ribonucleoside 5'-phosphate + diphosphate + H(+). It catalyses the reaction a 2'-deoxyribonucleoside 5'-triphosphate + H2O = a 2'-deoxyribonucleoside 5'-phosphate + diphosphate + H(+). Functionally, nucleoside triphosphate pyrophosphatase. May have a dual role in cell division arrest and in preventing the incorporation of modified nucleotides into cellular nucleic acids. This chain is Nucleoside triphosphate pyrophosphatase, found in Rickettsia conorii (strain ATCC VR-613 / Malish 7).